The primary structure comprises 159 residues: MNITIISVGKIKEKYLEDAVLEYKKRLSRYTKLNIIEISDEKTPENPSDVEKSKILDKEAEGIFKNLKGDFYVVTLEILGKELDSKELAKNINDLSISGKKNIVFVIGGSLGLSQKVSEKSNFKLSFSKMTFPHQLMRVILLEQIYRSFRIINGEPYHK.

S-adenosyl-L-methionine contacts are provided by residues Leu-76, Gly-108, and 127–132 (FSKMTF).

The protein belongs to the RNA methyltransferase RlmH family.

The protein resides in the cytoplasm. It carries out the reaction pseudouridine(1915) in 23S rRNA + S-adenosyl-L-methionine = N(3)-methylpseudouridine(1915) in 23S rRNA + S-adenosyl-L-homocysteine + H(+). Functionally, specifically methylates the pseudouridine at position 1915 (m3Psi1915) in 23S rRNA. The protein is Putative ribosomal RNA large subunit methyltransferase H of Methanococcus vannielii (strain ATCC 35089 / DSM 1224 / JCM 13029 / OCM 148 / SB).